We begin with the raw amino-acid sequence, 1027 residues long: Translation initiation factor IF-2 (1027 aa).

The tract at residues 31 to 433 (YVKSASSTVE…GGVRLPRGNG (403 aa)) is disordered. Positions 57–68 (KKGGGDSNGRAG) are enriched in gly residues. Over residues 110-122 (GPKPGPKPGPKAP) the composition is skewed to pro residues. Low complexity predominate over residues 123–145 (APETKPFEEAPAPAAKADAPAQP). Residues 148 to 171 (EQPRSEQPRSEQPRSEQPRSERSG) show a composition bias toward basic and acidic residues. 2 stretches are compositionally biased toward pro residues: residues 174 to 188 (PGGP…PKPG) and 201 to 212 (PPKPQSPKPGPR). The segment covering 237-268 (PGGGQRQGGQGPGRGGPQGGRPDRQGGGGQGA) has biased composition (gly residues). Pro residues predominate over residues 293–302 (GMMPPRPNPG). Gly residues predominate over residues 311-397 (SGGGPGGGRG…GAAGAFGRPG (87 aa)). Residues 401-410 (RRGRKSKRQK) are compositionally biased toward basic residues. One can recognise a tr-type G domain in the interval 523 to 695 (SRPPVVTVMG…ILLTADATLD (173 aa)). Residues 532–539 (GHVDHGKT) are G1. 532–539 (GHVDHGKT) serves as a coordination point for GTP. The interval 557-561 (GITQH) is G2. Residues 582-585 (DTPG) form a G3 region. Residues 582–586 (DTPGH) and 636–639 (NKID) each bind GTP. The tract at residues 636–639 (NKID) is G4. The tract at residues 672–674 (SAR) is G5.

It belongs to the TRAFAC class translation factor GTPase superfamily. Classic translation factor GTPase family. IF-2 subfamily.

The protein localises to the cytoplasm. In terms of biological role, one of the essential components for the initiation of protein synthesis. Protects formylmethionyl-tRNA from spontaneous hydrolysis and promotes its binding to the 30S ribosomal subunits. Also involved in the hydrolysis of GTP during the formation of the 70S ribosomal complex. The chain is Translation initiation factor IF-2 from Saccharopolyspora erythraea (strain ATCC 11635 / DSM 40517 / JCM 4748 / NBRC 13426 / NCIMB 8594 / NRRL 2338).